The primary structure comprises 547 residues: Chaperonin GroEL (547 aa).

ATP-binding positions include 30 to 33, lysine 51, 87 to 91, glycine 415, and aspartate 496; these read TLGP and DGTTT. The segment at 528-547 is disordered; sequence KEGAAPAGGMPDMGGMGGMM. Residues 538–547 are compositionally biased toward gly residues; the sequence is PDMGGMGGMM.

The protein belongs to the chaperonin (HSP60) family. Forms a cylinder of 14 subunits composed of two heptameric rings stacked back-to-back. Interacts with the co-chaperonin GroES.

The protein localises to the cytoplasm. It carries out the reaction ATP + H2O + a folded polypeptide = ADP + phosphate + an unfolded polypeptide.. In terms of biological role, together with its co-chaperonin GroES, plays an essential role in assisting protein folding. The GroEL-GroES system forms a nano-cage that allows encapsulation of the non-native substrate proteins and provides a physical environment optimized to promote and accelerate protein folding. The chain is Chaperonin GroEL from Ruegeria sp. (strain TM1040) (Silicibacter sp.).